Reading from the N-terminus, the 615-residue chain is DNA mismatch repair protein MutL (615 aa).

The segment at 370 to 397 (EPVAPRYTPAPASGSRPAAPWPNTQPGY) is disordered. Low complexity predominate over residues 378-391 (PAPASGSRPAAPWP).

This sequence belongs to the DNA mismatch repair MutL/HexB family.

In terms of biological role, this protein is involved in the repair of mismatches in DNA. It is required for dam-dependent methyl-directed DNA mismatch repair. May act as a 'molecular matchmaker', a protein that promotes the formation of a stable complex between two or more DNA-binding proteins in an ATP-dependent manner without itself being part of a final effector complex. The protein is DNA mismatch repair protein MutL of Shigella dysenteriae serotype 1 (strain Sd197).